A 637-amino-acid chain; its full sequence is ATP-dependent zinc metalloprotease FtsH (637 aa).

Topologically, residues 1 to 6 are cytoplasmic; it reads MNNQGR. The chain crosses the membrane as a helical span at residues 7-27; sequence SILAWATLFIFVILLFNVFQS. The Periplasmic segment spans residues 28–103; the sequence is DSLLGGRNNI…VVPLETRMNT (76 aa). The helical transmembrane segment at 104–124 threads the bilayer; sequence FLGFLISWFPMLLLIGVWVFF. Residues 125 to 637 lie on the Cytoplasmic side of the membrane; that stretch reads MRQMHGGGKA…TKAKKENYAS (513 aa). 195 to 202 lines the ATP pocket; it reads GPPGTGKT. Residue His417 coordinates Zn(2+). Residue Glu418 is part of the active site. Zn(2+)-binding residues include His421 and Asp495. Residues 603 to 637 are disordered; the sequence is ENKFPFNDSSTIKIDKEKSPEKTKTTKAKKENYAS. Residues 615-637 are compositionally biased toward basic and acidic residues; it reads KIDKEKSPEKTKTTKAKKENYAS.

The protein in the central section; belongs to the AAA ATPase family. It in the C-terminal section; belongs to the peptidase M41 family. Homohexamer. Zn(2+) serves as cofactor.

The protein resides in the cell inner membrane. In terms of biological role, acts as a processive, ATP-dependent zinc metallopeptidase for both cytoplasmic and membrane proteins. Plays a role in the quality control of integral membrane proteins. The protein is ATP-dependent zinc metalloprotease FtsH of Rickettsia conorii (strain ATCC VR-613 / Malish 7).